Here is a 276-residue protein sequence, read N- to C-terminus: MSLWFLVFLSVLQGVTELFPVSSLGHTLLVPALFGMHIDKHAPQLLPFLVALHLGTALALLWYFRARWIALISGFFAQLGGRKNDDGHLMWALIIGTIPTGIVGLLLEKRLERVFHDLRIVAVALIINGVLLWVGDRIQRSRAHQAPEKMTFKQAFFVGLAQIGALIPGFSRSGLTMIAGNVAGLTAEKAAEFSFLLGTPIIFAAGVLELPKLFHARDQLMDALLGGVLTAIAAYLSVRFLMRYFEGRGRLASFGVYCVIAGVFFLGWFMLHPQPV.

8 consecutive transmembrane segments (helical) span residues 1–21, 44–64, 87–107, 114–134, 150–170, 190–210, 220–240, and 251–271; these read MSLW…LFPV, QLLP…LWYF, GHLM…GLLL, VFHD…LLWV, MTFK…IPGF, AAEF…VLEL, LMDA…SVRF, and LASF…WFML.

This sequence belongs to the UppP family.

Its subcellular location is the cell inner membrane. The enzyme catalyses di-trans,octa-cis-undecaprenyl diphosphate + H2O = di-trans,octa-cis-undecaprenyl phosphate + phosphate + H(+). Catalyzes the dephosphorylation of undecaprenyl diphosphate (UPP). Confers resistance to bacitracin. In Burkholderia ambifaria (strain ATCC BAA-244 / DSM 16087 / CCUG 44356 / LMG 19182 / AMMD) (Burkholderia cepacia (strain AMMD)), this protein is Undecaprenyl-diphosphatase 2.